The primary structure comprises 506 residues: MARLALLSVSNKTGLIDLARRLVEEFEFDLISSGGTAQALKDAGLPVTKVADYTGSPEILGGRVKTLHPRIHGGILARRDVPSDLTDLENNQIRPIDLVVVNLYPFEETIAKPGVTLAEAVEQIDIGGPAMLRASSKNFAHLTVLCDPAQYDEYLQELRQNNGVASLEFRQKAALKGFLHTASYDSAIASYLSGTQQHTLNGTELQSLRYGENPHQPAAWYQTGTTPTGWTAAKKLQGKELSYNNLVDLEAARRIIAEFTDTPAATIIKHTNPCGTALADTIVEAYQKAFNADATSAFGGIVALNRPIDAATASELTKTFLECVVAPDCDAEAQKILAKKSNVRVLTLADLSTGPKTLVKQIAGGFLVQAADDIAADTIQWQVVTERQPTADELAELLFAWKVCKHVKSNAIVVTSDRTTLGVGAGQMNRIGSTKIALEQAGDKAKGAILASDGFFPFDDTVRTAAAAGISAIVQPGGSLRDQDSVKAANELGLLMVLTGVRHFLH.

Positions 1-146 (MARLALLSVS…KNFAHLTVLC (146 aa)) constitute an MGS-like domain.

The protein belongs to the PurH family.

The enzyme catalyses (6R)-10-formyltetrahydrofolate + 5-amino-1-(5-phospho-beta-D-ribosyl)imidazole-4-carboxamide = 5-formamido-1-(5-phospho-D-ribosyl)imidazole-4-carboxamide + (6S)-5,6,7,8-tetrahydrofolate. It carries out the reaction IMP + H2O = 5-formamido-1-(5-phospho-D-ribosyl)imidazole-4-carboxamide. The protein operates within purine metabolism; IMP biosynthesis via de novo pathway; 5-formamido-1-(5-phospho-D-ribosyl)imidazole-4-carboxamide from 5-amino-1-(5-phospho-D-ribosyl)imidazole-4-carboxamide (10-formyl THF route): step 1/1. It participates in purine metabolism; IMP biosynthesis via de novo pathway; IMP from 5-formamido-1-(5-phospho-D-ribosyl)imidazole-4-carboxamide: step 1/1. The chain is Bifunctional purine biosynthesis protein PurH from Trichormus variabilis (strain ATCC 29413 / PCC 7937) (Anabaena variabilis).